The chain runs to 291 residues: Putative transport permease ycf38 (291 aa).

6 consecutive transmembrane segments (helical) span residues Ala47–Phe67, Ser87–Phe107, Phe135–Gly155, Leu165–Leu185, Leu195–Pro215, and Ile262–Val282. Residues Ala47 to Arg289 form the ABC transmembrane type-2 domain.

This sequence belongs to the ABC-2 integral membrane protein family.

The protein resides in the plastid. The protein localises to the chloroplast membrane. This Porphyra purpurea (Red seaweed) protein is Putative transport permease ycf38 (ycf38).